We begin with the raw amino-acid sequence, 787 residues long: Protein translocase subunit SecA (787 aa).

Residues Q85, 103–107 (GEGKT), and D492 contribute to the ATP site.

It belongs to the SecA family. In terms of assembly, monomer and homodimer. Part of the essential Sec protein translocation apparatus which comprises SecA, SecYEG and auxiliary proteins SecDF. Other proteins may also be involved.

The protein resides in the cell membrane. The protein localises to the cytoplasm. It catalyses the reaction ATP + H2O + cellular proteinSide 1 = ADP + phosphate + cellular proteinSide 2.. In terms of biological role, part of the Sec protein translocase complex. Interacts with the SecYEG preprotein conducting channel. Has a central role in coupling the hydrolysis of ATP to the transfer of proteins into and across the cell membrane, serving as an ATP-driven molecular motor driving the stepwise translocation of polypeptide chains across the membrane. The chain is Protein translocase subunit SecA from Latilactobacillus sakei subsp. sakei (strain 23K) (Lactobacillus sakei subsp. sakei).